Reading from the N-terminus, the 243-residue chain is Protein S40-7 (243 aa).

Disordered regions lie at residues 1 to 68 and 107 to 143; these read MNKN…KSGL and SSTASSSSSSGGGASAGSSSSARAIPTAPKPPQERLP. Positions 10 to 20 are enriched in polar residues; that stretch reads SSPSSLATISD. A compositionally biased stretch (acidic residues) spans 22–32; the sequence is ADGELNEDDIF. A compositionally biased stretch (polar residues) spans 47 to 67; the sequence is PVSSPAKQQTPARQLQRSKSG.

The protein belongs to the senescence regulator S40 family.

It is found in the cytoplasm. This chain is Protein S40-7, found in Arabidopsis thaliana (Mouse-ear cress).